Here is a 331-residue protein sequence, read N- to C-terminus: MAPAVLTAIPNRMSLRSLKWSLLLLSLLSFLVIWYLSLPHYNVIERVNWMYFYEYEPIYRQDFQFTLREHSNCSQQNPFLVILVTSRPSDVKARQAIRVTWGEKKTWWGHEVLTFFLLGQEAEREDKVLALSLEDEHALYGDIIRQDFLDTYNNLTLKTIMAFRWVIEFCPNAKYVMKTDTDVFINTGNLVKYLLNLNHSEKFFTGYPLIENYSYRGFFHKNHISYQEYPFKVFPPYCSGLGYIMSGDLVPKIYEMMGHVKPIKFEDVYVGICLNLLKVDIHIPEDTNLFFLFRIHLDVCQLRRVIAAHGFSSKEIITFWQVMLRNTTCHY.

Over 1–20 (MAPAVLTAIPNRMSLRSLKW) the chain is Cytoplasmic. A helical; Signal-anchor for type II membrane protein membrane pass occupies residues 21 to 43 (SLLLLSLLSFLVIWYLSLPHYNV). Topologically, residues 44 to 331 (IERVNWMYFY…VMLRNTTCHY (288 aa)) are lumenal. N-linked (GlcNAc...) asparagine glycosylation is found at Asn-72, Asn-154, Asn-198, Asn-212, and Asn-326.

This sequence belongs to the glycosyltransferase 31 family. Requires Mg(2+) as cofactor.

It is found in the golgi apparatus membrane. It catalyses the reaction a globoside Gb3Cer (d18:1(4E)) + UDP-N-acetyl-alpha-D-galactosamine = a globoside Gb4Cer (d18:1(4E)) + UDP + H(+). Its pathway is protein modification; protein glycosylation. In terms of biological role, transfers N-acetylgalactosamine onto globotriaosylceramide. Plays a critical role in preimplantation stage embryonic development. In Rattus norvegicus (Rat), this protein is UDP-GalNAc:beta-1,3-N-acetylgalactosaminyltransferase 1 (B3galnt1).